Here is a 154-residue protein sequence, read N- to C-terminus: SsrA-binding protein (154 aa).

This sequence belongs to the SmpB family.

The protein localises to the cytoplasm. Its function is as follows. Required for rescue of stalled ribosomes mediated by trans-translation. Binds to transfer-messenger RNA (tmRNA), required for stable association of tmRNA with ribosomes. tmRNA and SmpB together mimic tRNA shape, replacing the anticodon stem-loop with SmpB. tmRNA is encoded by the ssrA gene; the 2 termini fold to resemble tRNA(Ala) and it encodes a 'tag peptide', a short internal open reading frame. During trans-translation Ala-aminoacylated tmRNA acts like a tRNA, entering the A-site of stalled ribosomes, displacing the stalled mRNA. The ribosome then switches to translate the ORF on the tmRNA; the nascent peptide is terminated with the 'tag peptide' encoded by the tmRNA and targeted for degradation. The ribosome is freed to recommence translation, which seems to be the essential function of trans-translation. This chain is SsrA-binding protein, found in Treponema pallidum (strain Nichols).